The primary structure comprises 1004 residues: Sodium/potassium-transporting ATPase subunit alpha-B (1004 aa).

A run of 2 helical transmembrane segments spans residues 76–96 and 110–126; these read LFGG…LAYG and NLYL…VTGI. Residues 197 to 216 form a disordered region; the sequence is SSLTGESEPQARSPEFTNDN. 2 helical membrane-spanning segments follow: residues 272–294 and 301–329; these read FIHI…AFVL and AVVF…TLTA. The 4-aspartylphosphate intermediate role is filled by Asp357. Lys489 serves as a coordination point for ATP. Positions 698 and 702 each coordinate Mg(2+). A run of 4 helical transmembrane segments spans residues 768–791, 828–855, 897–918, and 934–959; these read ISPF…ILCI, ERLI…VIMA, SSCH…LIIS, and ILNF…DKGL.

The protein belongs to the cation transport ATPase (P-type) (TC 3.A.3) family. Type IIC subfamily. In terms of assembly, the sodium/potassium-transporting ATPase is composed of a catalytic alpha subunit, an auxiliary non-catalytic beta subunit and an additional regulatory subunit.

The protein resides in the cell membrane. The catalysed reaction is K(+)(out) + Na(+)(in) + ATP + H2O = K(+)(in) + Na(+)(out) + ADP + phosphate + H(+). Its function is as follows. This is the catalytic component of the active enzyme, which catalyzes the hydrolysis of ATP coupled with the exchange of sodium and potassium ions across the plasma membrane. This action creates the electrochemical gradient of sodium and potassium ions, providing the energy for active transport of various nutrients. The sequence is that of Sodium/potassium-transporting ATPase subunit alpha-B from Artemia franciscana (Brine shrimp).